The following is a 76-amino-acid chain: Protein sigN132 (76 aa).

A compositionally biased stretch (polar residues) spans 1 to 13 (MLFESISTLSNLK). A disordered region spans residues 1–33 (MLFESISTLSNLKSASKSSMIASTGSTSSKSSN). Low complexity predominate over residues 14–33 (SASKSSMIASTGSTSSKSSN).

This is Protein sigN132 from Dictyostelium discoideum (Social amoeba).